Consider the following 609-residue polypeptide: Alpha-glycerophosphate oxidase (609 aa).

D21–E49 contributes to the FAD binding site.

The cofactor is FAD.

It localises to the cytoplasm. The enzyme catalyses sn-glycerol 3-phosphate + O2 = dihydroxyacetone phosphate + H2O2. Its pathway is membrane lipid metabolism; glycerophospholipid metabolism. In Enterococcus casseliflavus (Enterococcus flavescens), this protein is Alpha-glycerophosphate oxidase (glpO).